The primary structure comprises 701 residues: Ribosomal RNA large subunit methyltransferase K/L (701 aa).

Residues leucine 43–leucine 154 form the THUMP domain.

The protein belongs to the methyltransferase superfamily. RlmKL family.

The protein localises to the cytoplasm. It catalyses the reaction guanosine(2445) in 23S rRNA + S-adenosyl-L-methionine = N(2)-methylguanosine(2445) in 23S rRNA + S-adenosyl-L-homocysteine + H(+). The catalysed reaction is guanosine(2069) in 23S rRNA + S-adenosyl-L-methionine = N(2)-methylguanosine(2069) in 23S rRNA + S-adenosyl-L-homocysteine + H(+). In terms of biological role, specifically methylates the guanine in position 2445 (m2G2445) and the guanine in position 2069 (m7G2069) of 23S rRNA. This Klebsiella pneumoniae (strain 342) protein is Ribosomal RNA large subunit methyltransferase K/L.